A 352-amino-acid polypeptide reads, in one-letter code: Protein RecA (352 aa).

68–75 (GPESSGKT) is an ATP binding site.

Belongs to the RecA family.

The protein resides in the cytoplasm. In terms of biological role, can catalyze the hydrolysis of ATP in the presence of single-stranded DNA, the ATP-dependent uptake of single-stranded DNA by duplex DNA, and the ATP-dependent hybridization of homologous single-stranded DNAs. It interacts with LexA causing its activation and leading to its autocatalytic cleavage. The chain is Protein RecA from Clostridium perfringens (strain SM101 / Type A).